The following is a 471-amino-acid chain: UTP--glucose-1-phosphate uridylyltransferase (471 aa).

UTP-binding positions include L87–G90, K101, Q164, and G193. G89–G90 provides a ligand contact to substrate. Substrate is bound by residues H194 and N222–D224. 2 residues coordinate UTP: D224 and K362.

It belongs to the UDPGP type 1 family.

It is found in the cytoplasm. The enzyme catalyses alpha-D-glucose 1-phosphate + UTP + H(+) = UDP-alpha-D-glucose + diphosphate. Its function is as follows. Plays a central role as a glucosyl donor in cellular metabolic pathways. This chain is UTP--glucose-1-phosphate uridylyltransferase (UGP), found in Astragalus penduliflorus (Mountain lentil).